A 408-amino-acid chain; its full sequence is Putative glutamate--cysteine ligase 2 (408 aa).

This sequence belongs to the glutamate--cysteine ligase type 2 family. YbdK subfamily.

The enzyme catalyses L-cysteine + L-glutamate + ATP = gamma-L-glutamyl-L-cysteine + ADP + phosphate + H(+). ATP-dependent carboxylate-amine ligase which exhibits weak glutamate--cysteine ligase activity. This chain is Putative glutamate--cysteine ligase 2, found in Bradyrhizobium sp. (strain ORS 278).